Consider the following 147-residue polypeptide: SsrA-binding protein (147 aa).

The protein belongs to the SmpB family.

It is found in the cytoplasm. Required for rescue of stalled ribosomes mediated by trans-translation. Binds to transfer-messenger RNA (tmRNA), required for stable association of tmRNA with ribosomes. tmRNA and SmpB together mimic tRNA shape, replacing the anticodon stem-loop with SmpB. tmRNA is encoded by the ssrA gene; the 2 termini fold to resemble tRNA(Ala) and it encodes a 'tag peptide', a short internal open reading frame. During trans-translation Ala-aminoacylated tmRNA acts like a tRNA, entering the A-site of stalled ribosomes, displacing the stalled mRNA. The ribosome then switches to translate the ORF on the tmRNA; the nascent peptide is terminated with the 'tag peptide' encoded by the tmRNA and targeted for degradation. The ribosome is freed to recommence translation, which seems to be the essential function of trans-translation. The sequence is that of SsrA-binding protein from Mycoplasmopsis agalactiae (strain NCTC 10123 / CIP 59.7 / PG2) (Mycoplasma agalactiae).